A 379-amino-acid polypeptide reads, in one-letter code: Probable purine permease 11 (379 aa).

The next 10 helical transmembrane spans lie at 43–63, 76–96, 114–134, 144–164, 167–187, 203–223, 239–259, 294–313, 314–330, and 334–354; these read WVLVSVNIFFLIGGQAASVLL, WMATLVQTAAFPILYIPLLLL, IVLIYVLLGVIIAGDNMLYSV, YSLICATQLAFNAVFSYFINA, FTALILNSVVLLSFSAALIAL, IVGFVCTLAASALYSLLLSLM, VLEMQIYTSLVATCVSVIGLF, VCSVGVVGLIFLVTSLFSNV, ISTLSLAVTPLAALVVF, and MSGVKIMAMLIAIWGFASYVY.

It belongs to the purine permeases (TC 2.A.7.14) family. As to quaternary structure, may form a complex with the potassium channel subunit KAT1.

It localises to the membrane. This is Probable purine permease 11 (PUP11) from Arabidopsis thaliana (Mouse-ear cress).